Here is a 259-residue protein sequence, read N- to C-terminus: Deoxyribose-phosphate aldolase (259 aa).

Asp102 functions as the Proton donor/acceptor in the catalytic mechanism. Residue Lys167 is the Schiff-base intermediate with acetaldehyde of the active site. Lys201 acts as the Proton donor/acceptor in catalysis.

The protein belongs to the DeoC/FbaB aldolase family. DeoC type 2 subfamily.

Its subcellular location is the cytoplasm. It carries out the reaction 2-deoxy-D-ribose 5-phosphate = D-glyceraldehyde 3-phosphate + acetaldehyde. It participates in carbohydrate degradation; 2-deoxy-D-ribose 1-phosphate degradation; D-glyceraldehyde 3-phosphate and acetaldehyde from 2-deoxy-alpha-D-ribose 1-phosphate: step 2/2. Functionally, catalyzes a reversible aldol reaction between acetaldehyde and D-glyceraldehyde 3-phosphate to generate 2-deoxy-D-ribose 5-phosphate. The polypeptide is Deoxyribose-phosphate aldolase (Salmonella typhi).